We begin with the raw amino-acid sequence, 187 residues long: MNMDHSSHSTMSSSSSMTMTMVFTNSHDTPLFSSAWTPSSSGAYAGTCIFLVVLAIINRCLVAFKASMEHYWFATHLNRRYIAIAGKSSEAGRIDTDPDAKVASLVTAQGVEESVKVVRRVSREPIPWRFSVDLPRAAIFLCITGVSYLLMLAVMTMNVGYFCSVLAGAFLGELAVGRYIQWNEHDH.

Helical transmembrane passes span 44–64 and 137–157; these read YAGTCIFLVVLAIINRCLVAF and AAIFLCITGVSYLLMLAVMTM.

The protein belongs to the copper transporter (Ctr) (TC 1.A.56) family. SLC31A subfamily.

It localises to the cell membrane. It carries out the reaction Cu(2+)(in) = Cu(2+)(out). Functionally, high-affinity copper transporter of plasma membrane that mediates copper uptake under low copper conditions. The mechanism driving the transmembrane transport of copper has still to be determined. Acts as a potential virulence factor. This Aspergillus fumigatus (strain ATCC MYA-4609 / CBS 101355 / FGSC A1100 / Af293) (Neosartorya fumigata) protein is High-affinity copper transporter ctrA2.